A 545-amino-acid polypeptide reads, in one-letter code: Membrane protein insertase YidC (545 aa).

The next 6 helical transmembrane spans lie at 10-30 (AIYL…IFFS), 319-339 (LLYF…NVIP), 341-361 (WGLS…PLTF), 407-427 (LGGC…YGLV), 467-487 (ILPF…SNVS), and 502-522 (MPIM…IYWI).

Belongs to the OXA1/ALB3/YidC family. Type 1 subfamily. As to quaternary structure, interacts with the Sec translocase complex via SecD. Specifically interacts with transmembrane segments of nascent integral membrane proteins during membrane integration.

The protein localises to the cell inner membrane. Required for the insertion and/or proper folding and/or complex formation of integral membrane proteins into the membrane. Involved in integration of membrane proteins that insert both dependently and independently of the Sec translocase complex, as well as at least some lipoproteins. Aids folding of multispanning membrane proteins. The protein is Membrane protein insertase YidC of Borrelia hermsii (strain HS1 / DAH).